The sequence spans 169 residues: Orotate phosphoribosyltransferase (169 aa).

5-phospho-alpha-D-ribose 1-diphosphate is bound by residues Arg-86, Lys-90, His-92, and 111-119; that span reads EDVTTSGGS. Positions 115 and 143 each coordinate orotate.

This sequence belongs to the purine/pyrimidine phosphoribosyltransferase family. PyrE subfamily. As to quaternary structure, homodimer. The cofactor is Mg(2+).

The enzyme catalyses orotidine 5'-phosphate + diphosphate = orotate + 5-phospho-alpha-D-ribose 1-diphosphate. It functions in the pathway pyrimidine metabolism; UMP biosynthesis via de novo pathway; UMP from orotate: step 1/2. Catalyzes the transfer of a ribosyl phosphate group from 5-phosphoribose 1-diphosphate to orotate, leading to the formation of orotidine monophosphate (OMP). The chain is Orotate phosphoribosyltransferase from Methanocorpusculum labreanum (strain ATCC 43576 / DSM 4855 / Z).